An 861-amino-acid polypeptide reads, in one-letter code: Cone cGMP-specific 3',5'-cyclic phosphodiesterase subunit alpha' (861 aa).

GAF domains follow at residues 75-224 (SAEQ…AVAL) and 256-433 (DVER…GWSL). 3',5'-cyclic GMP-binding positions include Ser97, Asn116, 169–172 (DKQT), and Thr176. The PDEase domain maps to 486-819 (EERQLLAILK…VEWKSLAEEY (334 aa)). His562 functions as the Proton donor in the catalytic mechanism. 4 residues coordinate a divalent metal cation: His566, His602, Asp603, and Asp723. Basic and acidic residues predominate over residues 826-839 (TEEEAGKQEEEASD). Positions 826-861 (TEEEAGKQEEEASDGKAATDLGGSAEDKKSKTCLML) are disordered. A Cysteine methyl ester modification is found at Cys858. Residue Cys858 is the site of S-geranylgeranyl cysteine attachment. Residues 859-861 (LML) constitute a propeptide, removed in mature form.

This sequence belongs to the cyclic nucleotide phosphodiesterase family. In terms of assembly, composed of two alpha' subunits that are associated with 3 smaller proteins of 11, 13, and 15 kDa. It depends on a divalent metal cation as a cofactor.

It localises to the cell membrane. The enzyme catalyses 3',5'-cyclic GMP + H2O = GMP + H(+). Its function is as follows. As cone-specific cGMP phosphodiesterase, it plays an essential role in light detection and cone phototransduction by rapidly decreasing intracellular levels of cGMP. The sequence is that of Cone cGMP-specific 3',5'-cyclic phosphodiesterase subunit alpha' (Pde6c) from Mus musculus (Mouse).